The primary structure comprises 269 residues: Shikimate dehydrogenase (NADP(+)) (269 aa).

Shikimate contacts are provided by residues 22 to 24 (TLS) and Thr68. Residue Lys72 is the Proton acceptor of the active site. The shikimate site is built by Asn93 and Asp104. Residues 128–132 (GAGGA), 152–157 (NRTNLR), and Phe210 each bind NADP(+). Position 212 (Tyr212) interacts with shikimate. Gly233 is a binding site for NADP(+).

The protein belongs to the shikimate dehydrogenase family. Homodimer.

It carries out the reaction shikimate + NADP(+) = 3-dehydroshikimate + NADPH + H(+). The protein operates within metabolic intermediate biosynthesis; chorismate biosynthesis; chorismate from D-erythrose 4-phosphate and phosphoenolpyruvate: step 4/7. Its function is as follows. Involved in the biosynthesis of the chorismate, which leads to the biosynthesis of aromatic amino acids. Catalyzes the reversible NADPH linked reduction of 3-dehydroshikimate (DHSA) to yield shikimate (SA). The sequence is that of Shikimate dehydrogenase (NADP(+)) from Saccharolobus islandicus (strain L.S.2.15 / Lassen #1) (Sulfolobus islandicus).